The sequence spans 445 residues: Methionine aminopeptidase 2 (445 aa).

The interval 1–80 (MAAQVASGVG…TSKVQTEPPR (80 aa)) is disordered. Over residues 57–71 (AKKKKKKTKKKKKGT) the composition is skewed to basic residues. His-195 contacts substrate. Asp-215, Asp-226, and His-295 together coordinate a divalent metal cation. Residue His-303 participates in substrate binding. Positions 331 and 426 each coordinate a divalent metal cation.

Belongs to the peptidase M24A family. Methionine aminopeptidase eukaryotic type 2 subfamily. Co(2+) is required as a cofactor. Requires Zn(2+) as cofactor. It depends on Mn(2+) as a cofactor. Fe(2+) serves as cofactor.

It localises to the cytoplasm. It carries out the reaction Release of N-terminal amino acids, preferentially methionine, from peptides and arylamides.. In terms of biological role, cotranslationally removes the N-terminal methionine from nascent proteins. The N-terminal methionine is often cleaved when the second residue in the primary sequence is small and uncharged (Met-Ala-, Cys, Gly, Pro, Ser, Thr, or Val). This chain is Methionine aminopeptidase 2, found in Paracoccidioides brasiliensis (strain Pb18).